The primary structure comprises 410 residues: Putative odorant receptor 65c (410 aa).

Over 1–59 (MDIRGNVHRFVKFYIDGWKHFRDPTMESSYSAVYYWREQMKAMFLYTTSKERQMPYRSS) the chain is Cytoplasmic. Residues 60-80 (WHTLVIIQATVCFLTMCYGVT) form a helical membrane-spanning segment. Topologically, residues 81–92 (ESLGDKVQMGRD) are extracellular. Residues 93–113 (IAFIIGFFYIAFKIYYFQWYG) traverse the membrane as a helical segment. The Cytoplasmic portion of the chain corresponds to 114–148 (DELDEVVEALETFHPWAQKGPGAVDYRTAKRWYFT). A helical membrane pass occupies residues 149–169 (LAFFLASSWLVFLCIFILLLI). Residues 170 to 222 (TSPLWVHQQILPLHAAFPFQWHEKSIHPISHAFIYLFQTWNVMYFLTWLVCIE) lie on the Extracellular side of the membrane. Residues 223–243 (GLSVSIYVEITFAIEVLCLEL) traverse the membrane as a helical segment. Over 244 to 279 (RHLHQRCHGYEQLRLETNRLVQFHQKIVHILDHTNK) the chain is Cytoplasmic. A helical transmembrane segment spans residues 280 to 300 (VFHGTLIMQMGVNFFLVSLSV). Residues 301 to 312 (LEAMEARKDPKV) are Extracellular-facing. A helical transmembrane segment spans residues 313 to 333 (VAQFAVLMLLALGHLSMWSYF). Topologically, residues 334-385 (GDLLSQKSLTISEAAYEAYDPIKGSKDVYRDLCLIIRRGQEPLIMRASPFPS) are cytoplasmic. A helical membrane pass occupies residues 386–406 (FNFINYSAILNQCYGILTFLL). At 407–410 (KTLD) the chain is on the extracellular side.

It belongs to the insect chemoreceptor superfamily. Heteromeric odorant receptor channel (TC 1.A.69) family. Or49a subfamily. In terms of assembly, interacts with Orco. Complexes exist early in the endomembrane system in olfactory sensory neurons (OSNs), coupling these complexes to the conserved ciliary trafficking pathway.

The protein resides in the cell membrane. Functionally, odorant receptor which mediates acceptance or avoidance behavior, depending on its substrates. The odorant receptor repertoire encodes a large collection of odor stimuli that vary widely in identity, intensity, and duration. May form a complex with Orco to form odorant-sensing units, providing sensitive and prolonged odorant signaling and calcium permeability. The sequence is that of Putative odorant receptor 65c (Or65c) from Drosophila melanogaster (Fruit fly).